A 242-amino-acid chain; its full sequence is 1-(5-phosphoribosyl)-5-[(5-phosphoribosylamino)methylideneamino] imidazole-4-carboxamide isomerase (242 aa).

Residue aspartate 8 is the Proton acceptor of the active site. Aspartate 129 (proton donor) is an active-site residue.

It belongs to the HisA/HisF family.

It is found in the cytoplasm. It carries out the reaction 1-(5-phospho-beta-D-ribosyl)-5-[(5-phospho-beta-D-ribosylamino)methylideneamino]imidazole-4-carboxamide = 5-[(5-phospho-1-deoxy-D-ribulos-1-ylimino)methylamino]-1-(5-phospho-beta-D-ribosyl)imidazole-4-carboxamide. Its pathway is amino-acid biosynthesis; L-histidine biosynthesis; L-histidine from 5-phospho-alpha-D-ribose 1-diphosphate: step 4/9. In Dictyoglomus thermophilum (strain ATCC 35947 / DSM 3960 / H-6-12), this protein is 1-(5-phosphoribosyl)-5-[(5-phosphoribosylamino)methylideneamino] imidazole-4-carboxamide isomerase.